The sequence spans 316 residues: Methionyl-tRNA formyltransferase (316 aa).

112-115 serves as a coordination point for (6S)-5,6,7,8-tetrahydrofolate; that stretch reads SLLP.

It belongs to the Fmt family.

The catalysed reaction is L-methionyl-tRNA(fMet) + (6R)-10-formyltetrahydrofolate = N-formyl-L-methionyl-tRNA(fMet) + (6S)-5,6,7,8-tetrahydrofolate + H(+). Its function is as follows. Attaches a formyl group to the free amino group of methionyl-tRNA(fMet). The formyl group appears to play a dual role in the initiator identity of N-formylmethionyl-tRNA by promoting its recognition by IF2 and preventing the misappropriation of this tRNA by the elongation apparatus. This is Methionyl-tRNA formyltransferase from Actinobacillus pleuropneumoniae serotype 7 (strain AP76).